The following is a 511-amino-acid chain: Apolipoprotein N-acyltransferase (511 aa).

A run of 6 helical transmembrane segments spans residues Pro-7–Phe-29, Gly-58–His-78, Leu-90–Trp-110, Leu-125–Phe-145, Val-163–Val-183, and Gly-192–Leu-212. The CN hydrolase domain occupies Ile-230–Pro-470. The active-site Proton acceptor is the Glu-269. Lys-330 is a catalytic residue. Residue Cys-382 is the Nucleophile of the active site. The chain crosses the membrane as a helical span at residues Val-482–Leu-502.

Belongs to the CN hydrolase family. Apolipoprotein N-acyltransferase subfamily.

Its subcellular location is the cell inner membrane. The enzyme catalyses N-terminal S-1,2-diacyl-sn-glyceryl-L-cysteinyl-[lipoprotein] + a glycerophospholipid = N-acyl-S-1,2-diacyl-sn-glyceryl-L-cysteinyl-[lipoprotein] + a 2-acyl-sn-glycero-3-phospholipid + H(+). Its pathway is protein modification; lipoprotein biosynthesis (N-acyl transfer). Catalyzes the phospholipid dependent N-acylation of the N-terminal cysteine of apolipoprotein, the last step in lipoprotein maturation. The chain is Apolipoprotein N-acyltransferase from Pseudomonas aeruginosa (strain ATCC 15692 / DSM 22644 / CIP 104116 / JCM 14847 / LMG 12228 / 1C / PRS 101 / PAO1).